The primary structure comprises 278 residues: HTH-type transcriptional activator RhaS (278 aa).

Positions 174 to 272 constitute an HTH araC/xylS-type domain; that stretch reads NLLLAWLEDH…NWSPRDIRQG (99 aa). 2 consecutive DNA-binding regions (H-T-H motif) follow at residues 191–212 and 239–262; these read DAVADQFSLSLRTLHRQLKQQT and VTDIAYRCGFSDSNHFSTLFRREF.

In terms of assembly, binds DNA as a dimer.

Its subcellular location is the cytoplasm. Activates expression of the rhaBAD and rhaT operons. In Escherichia coli O6:H1 (strain CFT073 / ATCC 700928 / UPEC), this protein is HTH-type transcriptional activator RhaS.